Consider the following 277-residue polypeptide: Sulfur carrier protein FdhD (277 aa).

Cys-121 serves as the catalytic Cysteine persulfide intermediate. 260–265 (FCKPGR) is a Mo-bis(molybdopterin guanine dinucleotide) binding site.

This sequence belongs to the FdhD family.

The protein localises to the cytoplasm. Functionally, required for formate dehydrogenase (FDH) activity. Acts as a sulfur carrier protein that transfers sulfur from IscS to the molybdenum cofactor prior to its insertion into FDH. The protein is Sulfur carrier protein FdhD of Escherichia coli O6:K15:H31 (strain 536 / UPEC).